The sequence spans 1693 residues: Latrophilin Cirl (1693 aa).

Over 1-774 (MVLQGAKQRL…LFTMFDGNMR (774 aa)) the chain is Extracellular. An SUEL-type lectin domain is found at 30–119 (ACEGKKLTIE…KYLEAHYQCV (90 aa)). Residues Asn-147, Asn-260, Asn-306, and Asn-345 are each glycosylated (N-linked (GlcNAc...) asparagine). The interval 190-309 (PPATHATPPG…GPSVSSNGSA (120 aa)) is disordered. Polar residues-rich tracts occupy residues 259–269 (SNATAPSNTRI) and 287–309 (KSSPNRTPGTAASGPSVSSNGSA). The disordered stretch occupies residues 379–406 (SFDEDDEEMAGTSTTTPMSTSGDCLHNS). Low complexity predominate over residues 390–399 (TSTTTPMSTS). Residues Asn-405, Asn-662, Asn-710, and Asn-737 are each glycosylated (N-linked (GlcNAc...) asparagine). Positions 568 to 761 (RSVVQKVKNI…AILMDVVDEH (194 aa)) constitute a GAIN-B domain. Cystine bridges form between Cys-716-Cys-743 and Cys-731-Cys-745. The tract at residues 716–761 (CVFWNYIDHAWSANGCSLESTNRTHSVCSCNHLTNFAILMDVVDEH) is GPS. Residues 775–795 (IFIYISIAICVVFIVIALLTL) traverse the membrane as a helical segment. Residues 796–808 (KLFNGVFVKSART) lie on the Cytoplasmic side of the membrane. Residues 809 to 829 (SIYINIYICLLAIELLFLLGI) form a helical membrane-spanning segment. Topologically, residues 830 to 835 (EQTETS) are extracellular. The chain crosses the membrane as a helical span at residues 836 to 856 (IFCGFITVFLHCAILSGTSWF). The Cytoplasmic portion of the chain corresponds to 857–882 (CYEAFHSYSTLTSDELLLEVDQTPKV). A helical membrane pass occupies residues 883–903 (NCYYLLSYGLSLSVVAISLVI). Over 904-927 (NPSTYTQNDYCVLMEANAVFYATF) the chain is Extracellular. The chain crosses the membrane as a helical span at residues 928-948 (VAPVLIFFMAAIGYTFLSWII). Over 949-975 (MCRKSRTGLKTKEHTRLATVRFDIRCS) the chain is Cytoplasmic. The chain crosses the membrane as a helical span at residues 976-996 (FVFFLLLSAVWCSAYFYLRGA). Residues 997 to 1003 (KMDEDVT) are Extracellular-facing. The chain crosses the membrane as a helical span at residues 1004–1024 (GIYGYNFICFNTLLGLYIFVF). The Cytoplasmic portion of the chain corresponds to 1025–1693 (HCIQNEKIRR…VRCYLEPLAK (669 aa)). The tract at residues 1089 to 1109 (PLGTNDDAHDEQQQQQHMSAT) is disordered. Residues Ser-1165, Ser-1256, and Ser-1263 each carry the phosphoserine modification. Disordered regions lie at residues 1237 to 1264 (KPNSQHGKKKRGGVGAIPASPSGSLHSR), 1279 to 1362 (KTKP…APPP), 1450 to 1529 (SRYG…LPPQ), and 1596 to 1678 (SMRG…SAML). Residues 1307-1323 (QQQQQLRQQRQQQQQQL) are compositionally biased toward low complexity. Phosphoserine occurs at positions 1324 and 1325. A compositionally biased stretch (low complexity) spans 1337-1357 (LHLQHQQQQQQQRRAGGQQQL). Over residues 1464–1475 (RNQQQQQHSLAQ) the composition is skewed to polar residues. Composition is skewed to acidic residues over residues 1485-1498 (DEDDDEDEDDEETT) and 1508-1521 (CDEEEEDEESDMED). Residues 1640 to 1663 (QQLQKLSPQSTTSSSSHTSHSNPH) are compositionally biased toward low complexity.

It belongs to the G-protein coupled receptor 2 family. LN-TM7 subfamily. Forms a heterodimer, consisting of a large extracellular region non-covalently linked to a seven-transmembrane moiety. In terms of processing, proteolytically cleaved into 2 subunits, an extracellular subunit and a seven-transmembrane subunit.

It is found in the cell membrane. The protein is Latrophilin Cirl of Drosophila pseudoobscura pseudoobscura (Fruit fly).